The following is a 358-amino-acid chain: Protein-glutamate methylesterase/protein-glutamine glutaminase 2 (358 aa).

The Response regulatory domain maps to 7 to 124 (SVLLVDDSAV…KNFLIESAAE (118 aa)). The residue at position 58 (aspartate 58) is a 4-aspartylphosphate. The region spanning 170-358 (AQTTERIVAI…QEIHQAILHR (189 aa)) is the CheB-type methylesterase domain. Active-site residues include serine 182, histidine 208, and aspartate 304.

The protein belongs to the CheB family. In terms of processing, phosphorylated by CheA. Phosphorylation of the N-terminal regulatory domain activates the methylesterase activity.

Its subcellular location is the cytoplasm. The catalysed reaction is [protein]-L-glutamate 5-O-methyl ester + H2O = L-glutamyl-[protein] + methanol + H(+). It catalyses the reaction L-glutaminyl-[protein] + H2O = L-glutamyl-[protein] + NH4(+). Involved in chemotaxis. Part of a chemotaxis signal transduction system that modulates chemotaxis in response to various stimuli. Catalyzes the demethylation of specific methylglutamate residues introduced into the chemoreceptors (methyl-accepting chemotaxis proteins or MCP) by CheR. Also mediates the irreversible deamidation of specific glutamine residues to glutamic acid. In Pseudomonas syringae pv. tomato (strain ATCC BAA-871 / DC3000), this protein is Protein-glutamate methylesterase/protein-glutamine glutaminase 2.